A 131-amino-acid polypeptide reads, in one-letter code: MNIIQQLEAEQAARLSETKTIPEFQPGDTVIVNVKVVEGERTRVQAYEGVCIARNGGGLNENFVVRKISYGEGVERVFPIYSPLIDSIKVVRRGKVRRAKLYYLRDRRGKSARIAERTDDRAKKAKATAAE.

The tract at residues 110–131 (KSARIAERTDDRAKKAKATAAE) is disordered. Positions 113-122 (RIAERTDDRA) are enriched in basic and acidic residues.

It belongs to the bacterial ribosomal protein bL19 family.

In terms of biological role, this protein is located at the 30S-50S ribosomal subunit interface and may play a role in the structure and function of the aminoacyl-tRNA binding site. This chain is Large ribosomal subunit protein bL19, found in Azorhizobium caulinodans (strain ATCC 43989 / DSM 5975 / JCM 20966 / LMG 6465 / NBRC 14845 / NCIMB 13405 / ORS 571).